The sequence spans 436 residues: MGKPVVAIVGRPNVGKSTIFNRIAGERISIVEDTPGVTRDRIYSSAEWLNYDFNLIDTGGIDIGDEPFLAQIRHQAEIAMDEADVIIFMVNGRDGVTSADEEVAKILYRTKKPVVLAVNKLDNPEMRSDVYDFYALGFGEPYPISGTHGLGLGDLLDAVAEHFKNLPDTQYDEQVVQFCLIGRPNVGKSSLVNAMLGEDRVIVSNIAGTTRDAVDTMFAYNQRDFVIVDTAGMRKKGKVYETTEKYSVLRALKAIDRSDVVAVVLDGEEGIIEQDKRIAGYAHEAGKAVVIVVNKWDAVEKDERTMKEFEQNIREHFQFLDYAPVLFMSALTKKRIHTLMPSIITASENHAMRVQTNILNDIIMDAVAMNPTPTHNGQRLKIYYATQVAIKPPSFVVFVNDPELMHFSYERFLENRIRDAFGFEGTPIKIFARARK.

2 EngA-type G domains span residues 4–167 and 176–351; these read PVVA…KNLP and VQFC…ENHA. Residues 10–17, 57–61, 119–122, 182–189, 229–233, and 294–297 each bind GTP; these read GRPNVGKS, DTGGI, NKLD, DTAGM, and NKWD. The KH-like domain maps to 352-436; that stretch reads MRVQTNILND…PIKIFARARK (85 aa).

This sequence belongs to the TRAFAC class TrmE-Era-EngA-EngB-Septin-like GTPase superfamily. EngA (Der) GTPase family. Associates with the 50S ribosomal subunit.

Functionally, GTPase that plays an essential role in the late steps of ribosome biogenesis. The polypeptide is GTPase Der (Bacillus pumilus (strain SAFR-032)).